Here is a 421-residue protein sequence, read N- to C-terminus: Glucose-1-phosphate adenylyltransferase (421 aa).

Alpha-D-glucose 1-phosphate-binding positions include tyrosine 108, glycine 173, 188–189, and serine 206; that span reads EK.

Belongs to the bacterial/plant glucose-1-phosphate adenylyltransferase family. As to quaternary structure, homotetramer.

It catalyses the reaction alpha-D-glucose 1-phosphate + ATP + H(+) = ADP-alpha-D-glucose + diphosphate. It participates in glycan biosynthesis; glycogen biosynthesis. Its function is as follows. Involved in the biosynthesis of ADP-glucose, a building block required for the elongation reactions to produce glycogen. Catalyzes the reaction between ATP and alpha-D-glucose 1-phosphate (G1P) to produce pyrophosphate and ADP-Glc. The chain is Glucose-1-phosphate adenylyltransferase from Mesorhizobium japonicum (strain LMG 29417 / CECT 9101 / MAFF 303099) (Mesorhizobium loti (strain MAFF 303099)).